The chain runs to 207 residues: MSAKNAELKKTNLKKNYKAVCMEPKLTQIYDFKGFKQEGLLIRKGMTRELKNELREVREQLTEKMEEIKQIKDIMDKDFDKLYEFVEIMKEMQQDMDEKMDVLINNQKNNKLPFQNQAKEQQKFWQLGKMDKSSQAMITEEPDGVPLACDKNVVPPKPTRNPLESLHPCQSCCEKCLLCALKTNRNQGRPSHHAWVPFSPLSSGAAF.

Residues 43 to 79 (RKGMTRELKNELREVREQLTEKMEEIKQIKDIMDKDF) are a coiled coil.

In terms of tissue distribution, testis-specific. Expressed during spermatogenesis.

Its subcellular location is the nucleus. The sequence is that of Testis-expressed protein 35 (Tex35) from Mus musculus (Mouse).